A 209-amino-acid chain; its full sequence is Thymidylate kinase (209 aa).

11-18 (GPDGAGKT) lines the ATP pocket.

It belongs to the thymidylate kinase family.

The catalysed reaction is dTMP + ATP = dTDP + ADP. Functionally, phosphorylation of dTMP to form dTDP in both de novo and salvage pathways of dTTP synthesis. This chain is Thymidylate kinase, found in Streptococcus thermophilus (strain ATCC BAA-250 / LMG 18311).